Reading from the N-terminus, the 295-residue chain is Bifunctional protein FolD (295 aa).

NADP(+)-binding positions include 166–168 (GRS), S191, and I232.

It belongs to the tetrahydrofolate dehydrogenase/cyclohydrolase family. In terms of assembly, homodimer.

The catalysed reaction is (6R)-5,10-methylene-5,6,7,8-tetrahydrofolate + NADP(+) = (6R)-5,10-methenyltetrahydrofolate + NADPH. The enzyme catalyses (6R)-5,10-methenyltetrahydrofolate + H2O = (6R)-10-formyltetrahydrofolate + H(+). It functions in the pathway one-carbon metabolism; tetrahydrofolate interconversion. Its function is as follows. Catalyzes the oxidation of 5,10-methylenetetrahydrofolate to 5,10-methenyltetrahydrofolate and then the hydrolysis of 5,10-methenyltetrahydrofolate to 10-formyltetrahydrofolate. The chain is Bifunctional protein FolD from Wolbachia pipientis subsp. Culex pipiens (strain wPip).